Here is a 232-residue protein sequence, read N- to C-terminus: Large ribosomal subunit protein uL1 (232 aa).

It belongs to the universal ribosomal protein uL1 family. In terms of assembly, part of the 50S ribosomal subunit.

Functionally, binds directly to 23S rRNA. The L1 stalk is quite mobile in the ribosome, and is involved in E site tRNA release. Its function is as follows. Protein L1 is also a translational repressor protein, it controls the translation of the L11 operon by binding to its mRNA. This chain is Large ribosomal subunit protein uL1, found in Chlamydia trachomatis serovar L2 (strain ATCC VR-902B / DSM 19102 / 434/Bu).